Consider the following 862-residue polypeptide: DNA mismatch repair protein MutS (862 aa).

Position 608–615 (608–615 (GPNMAGKS)) interacts with ATP.

This sequence belongs to the DNA mismatch repair MutS family.

Functionally, this protein is involved in the repair of mismatches in DNA. It is possible that it carries out the mismatch recognition step. This protein has a weak ATPase activity. The sequence is that of DNA mismatch repair protein MutS from Borrelia garinii subsp. bavariensis (strain ATCC BAA-2496 / DSM 23469 / PBi) (Borreliella bavariensis).